The chain runs to 637 residues: 1-deoxy-D-xylulose-5-phosphate synthase (637 aa).

Thiamine diphosphate contacts are provided by residues His-74 and 115–117 (GHS). Asp-146 contacts Mg(2+). Thiamine diphosphate is bound by residues 147-148 (GA), Asn-175, Tyr-285, and Glu-366. Asn-175 serves as a coordination point for Mg(2+).

The protein belongs to the transketolase family. DXPS subfamily. In terms of assembly, homodimer. The cofactor is Mg(2+). Thiamine diphosphate serves as cofactor.

It catalyses the reaction D-glyceraldehyde 3-phosphate + pyruvate + H(+) = 1-deoxy-D-xylulose 5-phosphate + CO2. It functions in the pathway metabolic intermediate biosynthesis; 1-deoxy-D-xylulose 5-phosphate biosynthesis; 1-deoxy-D-xylulose 5-phosphate from D-glyceraldehyde 3-phosphate and pyruvate: step 1/1. Its function is as follows. Catalyzes the acyloin condensation reaction between C atoms 2 and 3 of pyruvate and glyceraldehyde 3-phosphate to yield 1-deoxy-D-xylulose-5-phosphate (DXP). This is 1-deoxy-D-xylulose-5-phosphate synthase from Pelotomaculum thermopropionicum (strain DSM 13744 / JCM 10971 / SI).